Here is a 244-residue protein sequence, read N- to C-terminus: Ribosome maturation factor RimM (244 aa).

The interval Met1–Met58 is disordered. The span at Lys13 to Lys22 shows a compositional bias: low complexity. A compositionally biased stretch (basic and acidic residues) spans Lys35–Ala44. The span at Lys45–Glu57 shows a compositional bias: low complexity. One can recognise a PRC barrel domain in the interval Ala163–Tyr244.

It belongs to the RimM family. In terms of assembly, binds ribosomal protein uS19.

The protein resides in the cytoplasm. An accessory protein needed during the final step in the assembly of 30S ribosomal subunit, possibly for assembly of the head region. Essential for efficient processing of 16S rRNA. May be needed both before and after RbfA during the maturation of 16S rRNA. It has affinity for free ribosomal 30S subunits but not for 70S ribosomes. This Paraburkholderia xenovorans (strain LB400) protein is Ribosome maturation factor RimM.